The sequence spans 185 residues: MLNEIFNKQKTQSEKSLEALKKDFTTLRTGKVNIHILDHITVDYYGTQTPLNQVATVLASDASTISITPWEKPLLKTIESAIAAANIGVNPNNDGESVKLFFPPMTREQREENVKQAKAMGEKAKVSIRNIRKDANDAVKKLEKDKAISEDEAKKAYDEVQKLTDTYTTKIDESVKSKESELLKV.

The protein belongs to the RRF family.

The protein localises to the cytoplasm. Responsible for the release of ribosomes from messenger RNA at the termination of protein biosynthesis. May increase the efficiency of translation by recycling ribosomes from one round of translation to another. This Campylobacter jejuni subsp. jejuni serotype O:23/36 (strain 81-176) protein is Ribosome-recycling factor.